A 170-amino-acid chain; its full sequence is Transcriptional repressor NrdR (170 aa).

Residues 3–34 (CPFCGTQDTKVVDSRLVSEGAQVRRRRTCIHC) fold into a zinc finger. The 91-residue stretch at 49–139 (PKLIKSDGSR…VYRSFKDISE (91 aa)) folds into the ATP-cone domain. Residues 151–170 (SVSIPKSKKTAPESKKEDQA) form a disordered region. The segment covering 160–170 (TAPESKKEDQA) has biased composition (basic and acidic residues).

The protein belongs to the NrdR family. Zn(2+) is required as a cofactor.

Its function is as follows. Negatively regulates transcription of bacterial ribonucleotide reductase nrd genes and operons by binding to NrdR-boxes. In Marinomonas sp. (strain MWYL1), this protein is Transcriptional repressor NrdR.